A 150-amino-acid polypeptide reads, in one-letter code: Retinal rod rhodopsin-sensitive cGMP 3',5'-cyclic phosphodiesterase subunit delta (150 aa).

The required for association with membranes stretch occupies residues 144-150 (RVRLFYV).

This sequence belongs to the PDE6D/unc-119 family. Interacts with the prenylated catalytic subunits of PDE6, an oligomer composed of two catalytic chains (PDE6A and PDE6B) and two inhibitory chains (gamma); has no effect on enzyme activity but promotes the release of the prenylated enzyme from cell membrane. Interacts with prenylated GRK1 and GRK7. Interacts with prenylated Ras family members, including RAP2A and RAP2C. Interacts with prenylated RHEB and NRAS. Interacts with prenylated HRAS and KRAS. Interacts with RAB13 (prenylated form); dissociates RAB13 from membranes. Interacts with prenylated INPP5E. Interacts with RAB28 (prenylated form); the interaction promotes RAB28 delivery to the photoreceptor outer segments. Interacts with RPGR. Interacts with ARL2. Interacts with ARL3; the interaction occurs specifically with the GTP-bound form of ARL3. Interaction with ARL2 and ARL3 promotes release of farnesylated cargo proteins. Widely expressed. Detected in various tissues including spleen, prostate gland, testis, ovary, small intestine, colon, retina, and peripheral blood.

The protein localises to the cytoplasm. The protein resides in the cytosol. Its subcellular location is the cytoplasmic vesicle membrane. It is found in the cytoskeleton. It localises to the cilium basal body. In terms of biological role, promotes the release of prenylated target proteins from cellular membranes. Modulates the activity of prenylated or palmitoylated Ras family members by regulating their subcellular location. Required for normal ciliary targeting of farnesylated target proteins, such as INPP5E. Required for RAB28 localization to the cone cell outer segments in the retina. Modulates the subcellular location of target proteins by acting as a GTP specific dissociation inhibitor (GDI). Increases the affinity of ARL3 for GTP by several orders of magnitude. Stabilizes ARL3-GTP by decreasing the nucleotide dissociation rate. The polypeptide is Retinal rod rhodopsin-sensitive cGMP 3',5'-cyclic phosphodiesterase subunit delta (PDE6D) (Homo sapiens (Human)).